The sequence spans 147 residues: Insertion element IS402 uncharacterized 16.2 kDa protein (147 aa).

Residues 106–147 (DSSSIRAVGAGQKLGQTPPIARDPVPSTTSSPTPTVRRSPRS) form a disordered region. Residues 129-147 (PVPSTTSSPTPTVRRSPRS) are compositionally biased toward low complexity.

Belongs to the transposase 6 family.

The protein is Insertion element IS402 uncharacterized 16.2 kDa protein of Burkholderia cepacia (Pseudomonas cepacia).